Consider the following 464-residue polypeptide: ATP synthase subunit beta (464 aa).

151-158 (GGAGVGKT) provides a ligand contact to ATP.

This sequence belongs to the ATPase alpha/beta chains family. As to quaternary structure, F-type ATPases have 2 components, CF(1) - the catalytic core - and CF(0) - the membrane proton channel. CF(1) has five subunits: alpha(3), beta(3), gamma(1), delta(1), epsilon(1). CF(0) has three main subunits: a(1), b(2) and c(9-12). The alpha and beta chains form an alternating ring which encloses part of the gamma chain. CF(1) is attached to CF(0) by a central stalk formed by the gamma and epsilon chains, while a peripheral stalk is formed by the delta and b chains.

Its subcellular location is the cell membrane. The enzyme catalyses ATP + H2O + 4 H(+)(in) = ADP + phosphate + 5 H(+)(out). Functionally, produces ATP from ADP in the presence of a proton gradient across the membrane. The catalytic sites are hosted primarily by the beta subunits. This is ATP synthase subunit beta from Bacillus cytotoxicus (strain DSM 22905 / CIP 110041 / 391-98 / NVH 391-98).